Consider the following 282-residue polypeptide: Heme oxygenase 1, chloroplastic (282 aa).

The N-terminal 54 residues, 1–54 (MAYLAPISSSLSIFKNPQLSRFQFSSSSPNPLFLRPRIQILSMTMNKSPSLVVV), are a transit peptide targeting the chloroplast. H86 contributes to the heme b binding site.

The protein belongs to the heme oxygenase family. In terms of tissue distribution, widely expressed.

Its subcellular location is the plastid. It localises to the chloroplast. It carries out the reaction heme b + 3 reduced [NADPH--hemoprotein reductase] + 3 O2 = biliverdin IXalpha + CO + Fe(2+) + 3 oxidized [NADPH--hemoprotein reductase] + 3 H2O + H(+). Activated by ascorbate. Key enzyme in the synthesis of the chromophore of the phytochrome family of plant photoreceptors. Catalyzes the opening of the heme ring to form the open-chain tetrapyrrole biliverdin IX with the release of iron and carbon monoxide (CO). Produces specifically the biliverdin IX-alpha isomer. Can form complex with heme, is ferredoxin-dependent and its activity is increased in the presence of ascorbate. Plays a role in salt acclimation signaling. May affect the plastid-to-nucleus signaling pathway by perturbing tetrapyrrole synthesis. The plastid-to-nucleus signal plays an important role in the coordinated expression of both nuclear- and chloroplast-localized genes that encode photosynthesis-related proteins. In Arabidopsis thaliana (Mouse-ear cress), this protein is Heme oxygenase 1, chloroplastic (HO1).